We begin with the raw amino-acid sequence, 436 residues long: GTPase Der (436 aa).

EngA-type G domains follow at residues 4 to 167 (PTVA…PNEI) and 175 to 351 (IKFS…HAQN). GTP is bound by residues 10–17 (GRPNVGKS), 57–61 (DTGGI), 119–122 (NKVD), 181–188 (GRPNVGKS), 229–233 (DTAGM), and 294–297 (NKWD). Residues 352–436 (LRISSSVLND…PVHLIARKRK (85 aa)) form the KH-like domain.

The protein belongs to the TRAFAC class TrmE-Era-EngA-EngB-Septin-like GTPase superfamily. EngA (Der) GTPase family. In terms of assembly, associates with the 50S ribosomal subunit.

In terms of biological role, GTPase that plays an essential role in the late steps of ribosome biogenesis. This chain is GTPase Der, found in Lactococcus lactis subsp. lactis (strain IL1403) (Streptococcus lactis).